Consider the following 259-residue polypeptide: Probable ABC transporter permease protein RP096 (259 aa).

5 helical membrane passes run 13–35 (TIKFAQSVGIFSLFSFIAISSII), 49–69 (LFIGFHSLPVVAMTTFFSGAV), 148–168 (VIAAIITMPCLVLIGDIIGVM), 195–215 (PIDVISGLIKATVFGFIISII), and 237–257 (AVVNSSILILISNYLITELFF).

This sequence belongs to the MlaE permease family.

It localises to the cell inner membrane. Its function is as follows. Could be part of an ABC transporter complex. The chain is Probable ABC transporter permease protein RP096 from Rickettsia prowazekii (strain Madrid E).